Reading from the N-terminus, the 252-residue chain is RNA-binding protein 7 (252 aa).

In terms of domain architecture, RRM spans 9–86 (RTLFVGNLDP…RQLNIKFKTG (78 aa)). 2 stretches are compositionally biased toward polar residues: residues 88-107 (SHIN…SPAN) and 119-137 (QMGS…PFSS). Disordered stretches follow at residues 88–137 (SHIN…PFSS) and 171–252 (QLRG…WKHF). Basic and acidic residues-rich tracts occupy residues 211 to 230 (ERNR…DRSG) and 237 to 252 (PPDR…WKHF).

As to quaternary structure, component of the nuclear exosome targeting (NEXT) complex composed of MTREX, ZCCHC8, and RBM7 that directs a subset of non-coding short-lived RNAs for exosomal degradation.

Its subcellular location is the nucleus. It localises to the nucleoplasm. Its function is as follows. RNA-binding subunit of the trimeric nuclear exosome targeting (NEXT) complex, a complex that functions as an RNA exosome cofactor that directs a subset of non-coding short-lived RNAs for exosomal degradation. NEXT is involved in surveillance and turnover of aberrant transcripts and non-coding RNAs. Binds preferentially polyuridine sequences and associates with newly synthesized RNAs, including pre-mRNAs and short-lived exosome substrates such as promoter upstream transcripts (PROMPTs), enhancer RNAs (eRNAs), and 3'-extended products from small nuclear RNAs (snRNAs). This chain is RNA-binding protein 7, found in Danio rerio (Zebrafish).